Here is a 643-residue protein sequence, read N- to C-terminus: Fructose-1,6-bisphosphatase class 3 (643 aa).

This sequence belongs to the FBPase class 3 family. The cofactor is Mn(2+).

It carries out the reaction beta-D-fructose 1,6-bisphosphate + H2O = beta-D-fructose 6-phosphate + phosphate. The protein operates within carbohydrate biosynthesis; gluconeogenesis. The chain is Fructose-1,6-bisphosphatase class 3 from Streptococcus agalactiae serotype Ia (strain ATCC 27591 / A909 / CDC SS700).